The primary structure comprises 230 residues: MQEKIRRKSSQPVYLYGMKNMLRIGNKLYTRTSKNKKVYGEDIIRFEHANYREWRPDRSKLAAAILKGLHNMPIGESSSILYLGASTGTTVSHVSDIAPSGRIYAVEVAYEPFSKLLDLAEQRDNIYPILEDANLPERYRFFVDHVDVIYQDISQRNQIAIFKRNMDEFQPRSAFLVLKTRSIASTEDAKTILRKTIEQLSSYNIREVIDLSPYDTDHYLILVDAKGVRR.

Residues 89–90 (TT), 107–108 (EV), 132–133 (DA), and 152–155 (DISQ) contribute to the S-adenosyl-L-methionine site.

This sequence belongs to the methyltransferase superfamily. Fibrillarin family. In terms of assembly, interacts with nop5. Component of box C/D small ribonucleoprotein (sRNP) particles that contain rpl7ae, FlpA and nop5, plus a guide RNA.

Involved in pre-rRNA and tRNA processing. Utilizes the methyl donor S-adenosyl-L-methionine to catalyze the site-specific 2'-hydroxyl methylation of ribose moieties in rRNA and tRNA. Site specificity is provided by a guide RNA that base pairs with the substrate. Methylation occurs at a characteristic distance from the sequence involved in base pairing with the guide RNA. This is Fibrillarin-like rRNA/tRNA 2'-O-methyltransferase from Thermoplasma acidophilum (strain ATCC 25905 / DSM 1728 / JCM 9062 / NBRC 15155 / AMRC-C165).